We begin with the raw amino-acid sequence, 486 residues long: UDP-N-acetylmuramate--L-alanine ligase (486 aa).

123–129 (GTHGKTT) contributes to the ATP binding site.

This sequence belongs to the MurCDEF family.

It is found in the cytoplasm. It catalyses the reaction UDP-N-acetyl-alpha-D-muramate + L-alanine + ATP = UDP-N-acetyl-alpha-D-muramoyl-L-alanine + ADP + phosphate + H(+). Its pathway is cell wall biogenesis; peptidoglycan biosynthesis. In terms of biological role, cell wall formation. The protein is UDP-N-acetylmuramate--L-alanine ligase of Pseudomonas fluorescens (strain Pf0-1).